A 189-amino-acid chain; its full sequence is Lipid A acyltransferase PagP (189 aa).

The signal sequence occupies residues 1–23 (MRLKLILYFLILSCYLGIGSARA). Residues His-61, Asp-104, and Ser-105 contribute to the active site.

The protein belongs to the lipid A palmitoyltransferase family. In terms of assembly, homodimer.

It localises to the cell outer membrane. The catalysed reaction is a lipid A + a 1,2-diacyl-sn-glycero-3-phosphocholine = a hepta-acyl lipid A + a 2-acyl-sn-glycero-3-phosphocholine. It catalyses the reaction a lipid IVA + a 1,2-diacyl-sn-glycero-3-phosphocholine = a lipid IVB + a 2-acyl-sn-glycero-3-phosphocholine. It carries out the reaction a lipid IIA + a 1,2-diacyl-sn-glycero-3-phosphocholine = a lipid IIB + a 2-acyl-sn-glycero-3-phosphocholine. In terms of biological role, transfers a fatty acid residue from the sn-1 position of a phospholipid to the N-linked hydroxyfatty acid chain on the proximal unit of lipid A or its precursors. This Erwinia tasmaniensis (strain DSM 17950 / CFBP 7177 / CIP 109463 / NCPPB 4357 / Et1/99) protein is Lipid A acyltransferase PagP.